Reading from the N-terminus, the 166-residue chain is EEF1A lysine methyltransferase 1 (166 aa).

This sequence belongs to the class I-like SAM-binding methyltransferase superfamily. EFM5 family.

Its subcellular location is the cytoplasm. It catalyses the reaction L-lysyl-[protein] + 3 S-adenosyl-L-methionine = N(6),N(6),N(6)-trimethyl-L-lysyl-[protein] + 3 S-adenosyl-L-homocysteine + 3 H(+). Protein-lysine methyltransferase that selectively catalyzes the trimethylation of EEF1A at 'Lys-79'. The sequence is that of EEF1A lysine methyltransferase 1 from Danio rerio (Zebrafish).